We begin with the raw amino-acid sequence, 518 residues long: Two-component response regulator-like PRR1 (518 aa).

A Response regulatory domain is found at 29–147; the sequence is RILLCDSDPS…ELLNLWTHVW (119 aa). Disordered stretches follow at residues 172-241, 266-305, and 483-518; these read PSDA…PGVM, TPTT…GTDV, and VRQA…SSPE. A compositionally biased stretch (polar residues) spans 196–212; the sequence is NQETSTSNQHEYESNPS. The region spanning 443–485 is the CCT domain; the sequence is RAAALAKFRLKRKERCFDKKVRYVNRKKLAETRPRVRGQFVRQ.

This sequence belongs to the ARR-like family. As to quaternary structure, interacts with PIL13. Interacts with PIL15.

It is found in the nucleus. Its function is as follows. Controls photoperiodic flowering response. Seems to be one of the component of the circadian clock. Expression of several members of the ARR-like family is controlled by circadian rhythm. The particular coordinated sequential expression of PRR73, PRR37, PRR95, PRR59 and PPR1 result to circadian waves that may be at the basis of the endogenous circadian clock. The protein is Two-component response regulator-like PRR1 (PRR1) of Oryza sativa subsp. japonica (Rice).